Here is a 283-residue protein sequence, read N- to C-terminus: Thymidylate synthase (283 aa).

Arg-22 lines the dUMP pocket. Cys-160 acts as the Nucleophile in catalysis. DUMP-binding positions include 180–183 (RSCD), Asn-191, and 221–223 (HIY). Asp-183 is a binding site for (6R)-5,10-methylene-5,6,7,8-tetrahydrofolate. Ser-282 is a (6R)-5,10-methylene-5,6,7,8-tetrahydrofolate binding site.

It belongs to the thymidylate synthase family. Bacterial-type ThyA subfamily. In terms of assembly, homodimer.

It localises to the cytoplasm. The catalysed reaction is dUMP + (6R)-5,10-methylene-5,6,7,8-tetrahydrofolate = 7,8-dihydrofolate + dTMP. Its pathway is pyrimidine metabolism; dTTP biosynthesis. Catalyzes the reductive methylation of 2'-deoxyuridine-5'-monophosphate (dUMP) to 2'-deoxythymidine-5'-monophosphate (dTMP) while utilizing 5,10-methylenetetrahydrofolate (mTHF) as the methyl donor and reductant in the reaction, yielding dihydrofolate (DHF) as a by-product. This enzymatic reaction provides an intracellular de novo source of dTMP, an essential precursor for DNA biosynthesis. This chain is Thymidylate synthase, found in Shewanella loihica (strain ATCC BAA-1088 / PV-4).